We begin with the raw amino-acid sequence, 396 residues long: Phosphopentomutase (396 aa).

Aspartate 14, aspartate 286, histidine 291, aspartate 327, histidine 328, and histidine 339 together coordinate Mn(2+).

This sequence belongs to the phosphopentomutase family. The cofactor is Mn(2+).

The protein localises to the cytoplasm. It catalyses the reaction 2-deoxy-alpha-D-ribose 1-phosphate = 2-deoxy-D-ribose 5-phosphate. The enzyme catalyses alpha-D-ribose 1-phosphate = D-ribose 5-phosphate. It participates in carbohydrate degradation; 2-deoxy-D-ribose 1-phosphate degradation; D-glyceraldehyde 3-phosphate and acetaldehyde from 2-deoxy-alpha-D-ribose 1-phosphate: step 1/2. Its function is as follows. Isomerase that catalyzes the conversion of deoxy-ribose 1-phosphate (dRib-1-P) and ribose 1-phosphate (Rib-1-P) to deoxy-ribose 5-phosphate (dRib-5-P) and ribose 5-phosphate (Rib-5-P), respectively. This chain is Phosphopentomutase, found in Staphylococcus epidermidis (strain ATCC 35984 / DSM 28319 / BCRC 17069 / CCUG 31568 / BM 3577 / RP62A).